Consider the following 139-residue polypeptide: D-ribose pyranase (139 aa).

Catalysis depends on His-20, which acts as the Proton donor. Residues Asp-28, His-106, and 128 to 130 (YAN) contribute to the substrate site.

This sequence belongs to the RbsD / FucU family. RbsD subfamily. As to quaternary structure, homodecamer.

The protein localises to the cytoplasm. It carries out the reaction beta-D-ribopyranose = beta-D-ribofuranose. The protein operates within carbohydrate metabolism; D-ribose degradation; D-ribose 5-phosphate from beta-D-ribopyranose: step 1/2. In terms of biological role, catalyzes the interconversion of beta-pyran and beta-furan forms of D-ribose. The chain is D-ribose pyranase from Shewanella halifaxensis (strain HAW-EB4).